The following is a 232-amino-acid chain: Enolase-phosphatase E1 (232 aa).

It belongs to the HAD-like hydrolase superfamily. MasA/MtnC family. Monomer. Mg(2+) serves as cofactor.

The catalysed reaction is 5-methylsulfanyl-2,3-dioxopentyl phosphate + H2O = 1,2-dihydroxy-5-(methylsulfanyl)pent-1-en-3-one + phosphate. It functions in the pathway amino-acid biosynthesis; L-methionine biosynthesis via salvage pathway; L-methionine from S-methyl-5-thio-alpha-D-ribose 1-phosphate: step 3/6. The protein operates within amino-acid biosynthesis; L-methionine biosynthesis via salvage pathway; L-methionine from S-methyl-5-thio-alpha-D-ribose 1-phosphate: step 4/6. Its function is as follows. Bifunctional enzyme that catalyzes the enolization of 2,3-diketo-5-methylthiopentyl-1-phosphate (DK-MTP-1-P) into the intermediate 2-hydroxy-3-keto-5-methylthiopentenyl-1-phosphate (HK-MTPenyl-1-P), which is then dephosphorylated to form the acireductone 1,2-dihydroxy-3-keto-5-methylthiopentene (DHK-MTPene). The protein is Enolase-phosphatase E1 of Xylella fastidiosa (strain 9a5c).